A 385-amino-acid polypeptide reads, in one-letter code: Glucans biosynthesis protein C (385 aa).

Helical transmembrane passes span 17-39 (AWLMLLGIPFHISLIYSSHTWHV), 54-76 (FIHSFRMQVFFVISGYFSYMLFL), 88-110 (VERVGIPMLTAIPLLTLPQFIML), 136-158 (LISHLWFLLVLVVMTTLCVWIFK), 179-198 (LSVIFLCLGIGYAVIRRTIF), 213-235 (IVMQTLFYLPFFILGALAFIFPH), 242-261 (TPSRGCTLAAALAFVAYLLN), 276-295 (SVITMVLGLWMVNVVFSFGH), 308-330 (FVNASLFIYLVHHPLTLFFGAYI), and 334-356 (ITSNWLGFLCGLIFVVGIAIILY).

Belongs to the acyltransferase 3 family. OpgC subfamily.

Its subcellular location is the cell membrane. It participates in glycan metabolism; osmoregulated periplasmic glucan (OPG) biosynthesis. Necessary for the succinyl substitution of periplasmic glucans. Could catalyze the transfer of succinyl residues from the cytoplasmic side of the membrane to the nascent glucan backbones on the periplasmic side of the membrane. This Escherichia coli O157:H7 protein is Glucans biosynthesis protein C.